The following is a 304-amino-acid chain: Non-specific ribonucleoside hydrolase RihC (304 aa).

The active site involves His235.

This sequence belongs to the IUNH family. RihC subfamily.

In terms of biological role, hydrolyzes both purine and pyrimidine ribonucleosides with a broad-substrate specificity. This Salmonella paratyphi A (strain ATCC 9150 / SARB42) protein is Non-specific ribonucleoside hydrolase RihC.